Consider the following 154-residue polypeptide: SsrA-binding protein (154 aa).

The protein belongs to the SmpB family.

The protein resides in the cytoplasm. Functionally, required for rescue of stalled ribosomes mediated by trans-translation. Binds to transfer-messenger RNA (tmRNA), required for stable association of tmRNA with ribosomes. tmRNA and SmpB together mimic tRNA shape, replacing the anticodon stem-loop with SmpB. tmRNA is encoded by the ssrA gene; the 2 termini fold to resemble tRNA(Ala) and it encodes a 'tag peptide', a short internal open reading frame. During trans-translation Ala-aminoacylated tmRNA acts like a tRNA, entering the A-site of stalled ribosomes, displacing the stalled mRNA. The ribosome then switches to translate the ORF on the tmRNA; the nascent peptide is terminated with the 'tag peptide' encoded by the tmRNA and targeted for degradation. The ribosome is freed to recommence translation, which seems to be the essential function of trans-translation. This chain is SsrA-binding protein, found in Staphylococcus aureus (strain Mu3 / ATCC 700698).